Reading from the N-terminus, the 166-residue chain is Endoribonuclease YbeY (166 aa).

Positions 132, 136, and 142 each coordinate Zn(2+).

It belongs to the endoribonuclease YbeY family. It depends on Zn(2+) as a cofactor.

It localises to the cytoplasm. Its function is as follows. Single strand-specific metallo-endoribonuclease involved in late-stage 70S ribosome quality control and in maturation of the 3' terminus of the 16S rRNA. This is Endoribonuclease YbeY from Clostridium botulinum (strain Langeland / NCTC 10281 / Type F).